The primary structure comprises 950 residues: MDKYALLQRAKLHLDFIHANSTTHSFLFGALAELLDNARDAGAVRLDVFSVDNETLQGGFMLCFLDDGCGMSPDEASDVIYFGTSKKRLSTLKFIGQYGNGLKSGSMRIGKDCILFTKKEETMTCLFFSQTFCEKEGLTEVVVPIPSWLTRTRESITDDPQKFFTELSIIFKYSPFKTEAELMQQFDMIYGRCGTLLIIYNLKLLLSGEPELDVTTDKEDILMAEAPEEIPERRSFRAYTAVLYFEPRMKIFIQAKRVQTKHLCYSLYKPRKYQYTTSSFKGKFKTEVQKAEEAVKRAELLFKEVQAKVNQPDRIALSSTQDALQKALQDVDTKHKSLRQKQRALRKARTLSLFFGVNTEDQHQAGMFIYSNNRLIKMYEKVGPQLKMKSLLGAGIIGIVNIPLETMEPSHNKQEFLNVQEYNHLLKVMGQYLIQYCKDIGISNRNLTLFWDEFKYQHSKDTDSSLESLQWRRRQAMGIPFILQCDLCLKWRVLPSSSNYQEKGLPDLWICASNPNNLENSCNQIERLPSIPLGTVNRRPPSKDERERQLQESVQRYQDKLVEAQPQKSQLIVTSKIPEFKSSCLSSALKEKSKLGRIQPSGADLTQGSPSSVKLSFMQRSQKRSTEDTHSDVEFICMTKIPKKSVKKTVKYLQPGHAPALLENLKLEDTAQVSSREIKKQQSESLVQAGKASTDVASSRDPTVTMVWDQSSTKVSLKQEEEEEVPLIKPDKQELCDDTPVVKGNSSALHWKSLPGVQMEDLSPRSGHKINSVSGDCQLPASPMPSQSMSVEETARKLLSNLREILLYFVPEFQLSSEFECTSVEELITNPELERCPENINEKLKTCFNQIQNIYMAQYEKRLKRKMQSIVYEANRRGLLNQVFLGQCELKRKRTEEKLSDLRAKLALLLQKLQLGGPAGDPQQIDAYLEDLLKEDRLPTALHEKSPESA.

A coiled-coil region spans residues 281 to 342 (KGKFKTEVQK…TKHKSLRQKQ (62 aa)). Residues 465–530 (SLESLQWRRR…SCNQIERLPS (66 aa)) form a CW-type zinc finger. Residues C485, C488, C511, and C522 each coordinate Zn(2+). 2 disordered regions span residues 532-551 (PLGTVNRRPPSKDERERQLQ) and 679-700 (KKQQSESLVQAGKASTDVASSR). Positions 541–550 (PSKDERERQL) are enriched in basic and acidic residues. A coiled-coil region spans residues 885 to 916 (LGQCELKRKRTEEKLSDLRAKLALLLQKLQLG).

Expressed at very low level in male germ cells.

The protein resides in the nucleus. Its function is as follows. Required for spermatogenesis. Essential for de novo DNA methylation and silencing of transposable elements in the male embryonic germ cells. Not required for piRNA biosynthesis. The chain is MORC family CW-type zinc finger protein 1 from Mus musculus (Mouse).